Consider the following 249-residue polypeptide: MFLSAALRARAAGLAAHWGKHIRNLHKTAVQNGAGGALFVHRDTPENNPETPFDFTPENYKRIEAIVKNYPEGHKAAAVLPVLDLAQRQNGWLPISAMNKVAEILQVPPMRVYEVATFYTMYNRKPVGKYHIQVCTTTPCMLRNSDSILEAIQKKLGIKVGETTPDKLFTLIEVECLGACVNAPMVQINDNYYEDLTPKDIEEIIDELKAGKIPKPGPRSGRFSCEPAGGLTSLTEPPKGPGFGVQAGL.

A mitochondrion-targeting transit peptide spans 1–32; that stretch reads MFLSAALRARAAGLAAHWGKHIRNLHKTAVQN. Lys61 is modified (N6-acetyllysine). 4 residues coordinate [2Fe-2S] cluster: Cys135, Cys140, Cys176, and Cys180. The residue at position 193 (Tyr193) is a Phosphotyrosine; by SRC. The disordered stretch occupies residues 213 to 249; sequence IPKPGPRSGRFSCEPAGGLTSLTEPPKGPGFGVQAGL.

Belongs to the complex I 24 kDa subunit family. In terms of assembly, core subunit of respiratory chain NADH dehydrogenase (Complex I) which is composed of 45 different subunits. This is a component of the flavoprotein-sulfur (FP) fragment of the enzyme. Requires [2Fe-2S] cluster as cofactor.

Its subcellular location is the mitochondrion inner membrane. It carries out the reaction a ubiquinone + NADH + 5 H(+)(in) = a ubiquinol + NAD(+) + 4 H(+)(out). Functionally, core subunit of the mitochondrial membrane respiratory chain NADH dehydrogenase (Complex I) which catalyzes electron transfer from NADH through the respiratory chain, using ubiquinone as an electron acceptor. Parts of the peripheral arm of the enzyme, where the electrons from NADH are accepted by flavin mononucleotide (FMN) and then passed along a chain of iron-sulfur clusters by electron tunnelling to the final acceptor ubiquinone. Contains one iron-sulfur cluster. The protein is NADH dehydrogenase [ubiquinone] flavoprotein 2, mitochondrial (NDUFV2) of Bos taurus (Bovine).